The following is a 340-amino-acid chain: Glycerol-3-phosphate dehydrogenase [NAD(P)+] (340 aa).

Residues Ser-11, Trp-12, Arg-33, and Lys-106 each coordinate NADPH. Sn-glycerol 3-phosphate contacts are provided by Lys-106, Gly-137, and Ser-139. Residue Ala-141 participates in NADPH binding. Sn-glycerol 3-phosphate-binding residues include Lys-192, Asp-245, Ser-255, Arg-256, and Asn-257. Lys-192 functions as the Proton acceptor in the catalytic mechanism. Position 256 (Arg-256) interacts with NADPH. NADPH is bound by residues Val-280 and Glu-282.

It belongs to the NAD-dependent glycerol-3-phosphate dehydrogenase family.

Its subcellular location is the cytoplasm. It carries out the reaction sn-glycerol 3-phosphate + NAD(+) = dihydroxyacetone phosphate + NADH + H(+). It catalyses the reaction sn-glycerol 3-phosphate + NADP(+) = dihydroxyacetone phosphate + NADPH + H(+). It functions in the pathway membrane lipid metabolism; glycerophospholipid metabolism. Its function is as follows. Catalyzes the reduction of the glycolytic intermediate dihydroxyacetone phosphate (DHAP) to sn-glycerol 3-phosphate (G3P), the key precursor for phospholipid synthesis. In Bacillus cereus (strain ATCC 10987 / NRS 248), this protein is Glycerol-3-phosphate dehydrogenase [NAD(P)+].